Consider the following 278-residue polypeptide: Translation initiation factor IF-3, mitochondrial (278 aa).

Residues 1 to 31 (MAALFLKRLTLQTVKSENSCIRCFGKHILQK) constitute a mitochondrion transit peptide. The disordered stretch occupies residues 249–278 (KAYKETQETQERDTLNKDHGNDKESNVLHQ).

This sequence belongs to the IF-3 family.

It localises to the mitochondrion. Functionally, IF-3 binds to the 28S ribosomal subunit and shifts the equilibrium between 55S ribosomes and their 39S and 28S subunits in favor of the free subunits, thus enhancing the availability of 28S subunits on which protein synthesis initiation begins. This is Translation initiation factor IF-3, mitochondrial (MTIF3) from Homo sapiens (Human).